The sequence spans 445 residues: MHPHDQTIFALSSGRPPSAIAIVRLSGVGAGPALQTLTGKLPPPRLATRALLRDDRGDPIDDAVVLWFPGPASATGEDVAELHVHGSRAVITTLVSLLSAMPQMRAADRGEFTRRAFENGKIDLTEAEGLDDLIHADTDRQRRQALRQLKGLLGDKARSWRDQIIQAAALIEAGIDFADEGDVPAELIAPALAWIRQLLAEIEEVLAAQGRAERLRDGLTVVIAGPPNAGKSTLMNQLARREVAIVSPHAGTTRDLIEVALDLDGYPVTVIDTAGIRQTDDPVEQEGVRRARDRAAQADLVLWLTEDDQAELERQTDGPIWFVRNKIDLMITEQSGAISVSPESPVFAISARSGAGMSDLLEALVGFARDYFGATEHGLITRERQRTWLSETAAALRRSIAAVDLGEELAAEELRIAALALGRLLGRVDVEDLLDVIFREFCIGK.

(6S)-5-formyl-5,6,7,8-tetrahydrofolate-binding residues include Arg24, Glu81, and Lys121. The 152-residue stretch at 218–369 folds into the TrmE-type G domain; the sequence is GLTVVIAGPP…LLEALVGFAR (152 aa). GTP contacts are provided by residues 228 to 233, 247 to 253, 272 to 275, and 350 to 352; these read NAGKST, SPHAGTT, DTAG, and SAR. Positions 232 and 253 each coordinate Mg(2+). Residue Lys445 participates in (6S)-5-formyl-5,6,7,8-tetrahydrofolate binding.

Belongs to the TRAFAC class TrmE-Era-EngA-EngB-Septin-like GTPase superfamily. TrmE GTPase family. Homodimer. Heterotetramer of two MnmE and two MnmG subunits. The cofactor is K(+).

Its subcellular location is the cytoplasm. Functionally, exhibits a very high intrinsic GTPase hydrolysis rate. Involved in the addition of a carboxymethylaminomethyl (cmnm) group at the wobble position (U34) of certain tRNAs, forming tRNA-cmnm(5)s(2)U34. This Bradyrhizobium sp. (strain BTAi1 / ATCC BAA-1182) protein is tRNA modification GTPase MnmE.